The primary structure comprises 245 residues: MGVPFDYAPDRPEHIDAILNGLDRYNPETTNIFQEYVTLQCEEKTYDCYANLALLKLYQFNPHLTKDETITNILVKSLTVFPSPDFSLALHLLPPHILTPISASSSLPAAGDAPLSEAVQKLAVLNTLLSSANYSQFWSTLDSDDLYADLIADVSGFEELVRIRIASTISQSVREVASSELENWLGMNGEAFEKFIKEVCGWTIENGVVIVPLNKENEAKGTVVRENVKMEQFSRVIKRAYEQPA.

The PCI domain occupies 46–227 (YDCYANLALL…EAKGTVVREN (182 aa)).

The protein belongs to the eIF-3 subunit K family. Component of the eukaryotic translation initiation factor 3 (eIF-3) complex.

The protein resides in the cytoplasm. Component of the eukaryotic translation initiation factor 3 (eIF-3) complex, which is involved in protein synthesis of a specialized repertoire of mRNAs and, together with other initiation factors, stimulates binding of mRNA and methionyl-tRNAi to the 40S ribosome. The eIF-3 complex specifically targets and initiates translation of a subset of mRNAs involved in cell proliferation. This Botryotinia fuckeliana (strain B05.10) (Noble rot fungus) protein is Eukaryotic translation initiation factor 3 subunit K.